A 306-amino-acid polypeptide reads, in one-letter code: Beta-lactamase 1 (306 aa).

Residues methionine 1–lysine 43 form the signal peptide. Serine 89 (acyl-ester intermediate) is an active-site residue. Glutamate 185 acts as the Proton acceptor in catalysis. Position 251-253 (lysine 251–glycine 253) interacts with substrate.

It belongs to the class-A beta-lactamase family.

It carries out the reaction a beta-lactam + H2O = a substituted beta-amino acid. Functionally, this protein is a beta-lactamase with a substrate specificity for penicillins. This Bacillus mycoides protein is Beta-lactamase 1 (blaCI).